Here is a 274-residue protein sequence, read N- to C-terminus: Bis(5'-nucleosyl)-tetraphosphatase, symmetrical (274 aa).

It belongs to the Ap4A hydrolase family.

The enzyme catalyses P(1),P(4)-bis(5'-adenosyl) tetraphosphate + H2O = 2 ADP + 2 H(+). Hydrolyzes diadenosine 5',5'''-P1,P4-tetraphosphate to yield ADP. In Shewanella sp. (strain MR-7), this protein is Bis(5'-nucleosyl)-tetraphosphatase, symmetrical.